Reading from the N-terminus, the 466-residue chain is Dihydrolipoyl dehydrogenase 3 (466 aa).

FAD-binding positions include 33–42, Lys51, and Gly115; that span reads EGRSTLGGTC. A disulfide bridge connects residues Cys42 and Cys47. NAD(+) is bound by residues 181–185, Glu204, Val238, and 271–274; these read GAGVI and AIGR. 2 residues coordinate FAD: Asp313 and Ala321. His445 acts as the Proton acceptor in catalysis.

It belongs to the class-I pyridine nucleotide-disulfide oxidoreductase family. Homodimer. The cofactor is FAD.

Its subcellular location is the cytoplasm. It carries out the reaction N(6)-[(R)-dihydrolipoyl]-L-lysyl-[protein] + NAD(+) = N(6)-[(R)-lipoyl]-L-lysyl-[protein] + NADH + H(+). Functionally, LPD-3 may substitute for lipoamide dehydrogenase of the 2-oxoglutarate dehydrogenase and pyruvate multienzyme complexes when the latter is inactive or missing. This is Dihydrolipoyl dehydrogenase 3 (lpd3) from Pseudomonas putida (Arthrobacter siderocapsulatus).